Here is a 193-residue protein sequence, read N- to C-terminus: Ion-translocating oxidoreductase complex subunit A (193 aa).

A run of 6 helical transmembrane segments spans residues 5-25 (LLLF…FLGL), 47-67 (FVIT…LLPL), 72-92 (LRTM…EMVV), 102-122 (LLGI…VPLL), 134-154 (AIYG…FAGV), and 171-191 (SIAL…AGLV).

Belongs to the NqrDE/RnfAE family. The complex is composed of six subunits: RnfA, RnfB, RnfC, RnfD, RnfE and RnfG.

The protein localises to the cell inner membrane. Functionally, part of a membrane-bound complex that couples electron transfer with translocation of ions across the membrane. This Erwinia tasmaniensis (strain DSM 17950 / CFBP 7177 / CIP 109463 / NCPPB 4357 / Et1/99) protein is Ion-translocating oxidoreductase complex subunit A.